The following is a 122-amino-acid chain: Small ribosomal subunit protein uS13 (122 aa).

The disordered stretch occupies residues 94–122 (GLPVRGQSTQKNARTRKGPRKTVAGKKGK). The segment covering 106–122 (ARTRKGPRKTVAGKKGK) has biased composition (basic residues).

This sequence belongs to the universal ribosomal protein uS13 family. In terms of assembly, part of the 30S ribosomal subunit. Forms a loose heterodimer with protein S19. Forms two bridges to the 50S subunit in the 70S ribosome.

Its function is as follows. Located at the top of the head of the 30S subunit, it contacts several helices of the 16S rRNA. In the 70S ribosome it contacts the 23S rRNA (bridge B1a) and protein L5 of the 50S subunit (bridge B1b), connecting the 2 subunits; these bridges are implicated in subunit movement. Contacts the tRNAs in the A and P-sites. This is Small ribosomal subunit protein uS13 from Mycoplasmopsis synoviae (strain 53) (Mycoplasma synoviae).